We begin with the raw amino-acid sequence, 447 residues long: UPF0210 protein Lreu_0940 (447 aa).

The protein belongs to the UPF0210 family. Homodimer.

This Limosilactobacillus reuteri (strain DSM 20016) (Lactobacillus reuteri) protein is UPF0210 protein Lreu_0940.